Reading from the N-terminus, the 191-residue chain is DNA-directed RNA polymerase subunit Rpo3 (191 aa).

Belongs to the archaeal Rpo3/eukaryotic RPB3 RNA polymerase subunit family. As to quaternary structure, part of the RNA polymerase complex. Interacts with Rpo12. Forms an Rpo3-Rpo10-Rpo11-Rpo12 complex upon coexpression.

It localises to the cytoplasm. It catalyses the reaction RNA(n) + a ribonucleoside 5'-triphosphate = RNA(n+1) + diphosphate. Functionally, DNA-dependent RNA polymerase (RNAP) catalyzes the transcription of DNA into RNA using the four ribonucleoside triphosphates as substrates. This Methanocaldococcus jannaschii (strain ATCC 43067 / DSM 2661 / JAL-1 / JCM 10045 / NBRC 100440) (Methanococcus jannaschii) protein is DNA-directed RNA polymerase subunit Rpo3.